We begin with the raw amino-acid sequence, 106 residues long: GSAPPGDPVEGKHLFHTICILCHTDIKGRNKVGPSLYGVVGRHSGIEPGYNYSEANIKSGIVWTPDVLFKYIEHPQKIVPGTKMGYPGQPDPQKRADIIAYLETLK.

Heme c is bound by residues cysteine 19, cysteine 22, histidine 23, and methionine 84.

This sequence belongs to the cytochrome c family. Binds 1 heme c group covalently per subunit.

This is Cytochrome c2 from Rhodopila globiformis (Rhodopseudomonas globiformis).